The following is a 189-amino-acid chain: Testis-expressed protein 22 (189 aa).

The tract at residues 1-120 (MDSRQQRPQR…TQSVPTPPLQ (120 aa)) is disordered. Residues 14 to 24 (QWQLAQEQRQQ) are compositionally biased toward low complexity. A compositionally biased stretch (basic and acidic residues) spans 70–87 (IDERRRLALQRMQERTDT). A compositionally biased stretch (low complexity) spans 103 to 114 (QQTETSPSTQSV).

As to expression, mainly expressed in spermatocytes and spermatids in testis.

The protein localises to the cytoplasm. It is found in the cytoplasmic vesicle. It localises to the secretory vesicle. Its subcellular location is the acrosome. In Mus musculus (Mouse), this protein is Testis-expressed protein 22 (Tex22).